The chain runs to 87 residues: DNA-directed RNA polymerase subunit omega (87 aa).

The protein belongs to the RNA polymerase subunit omega family. In terms of assembly, the RNAP catalytic core consists of 2 alpha, 1 beta, 1 beta' and 1 omega subunit. When a sigma factor is associated with the core the holoenzyme is formed, which can initiate transcription.

It catalyses the reaction RNA(n) + a ribonucleoside 5'-triphosphate = RNA(n+1) + diphosphate. Promotes RNA polymerase assembly. Latches the N- and C-terminal regions of the beta' subunit thereby facilitating its interaction with the beta and alpha subunits. The sequence is that of DNA-directed RNA polymerase subunit omega from Pseudomonas putida (strain ATCC 700007 / DSM 6899 / JCM 31910 / BCRC 17059 / LMG 24140 / F1).